A 472-amino-acid chain; its full sequence is Aspartyl/glutamyl-tRNA(Asn/Gln) amidotransferase subunit B (472 aa).

This sequence belongs to the GatB/GatE family. GatB subfamily. As to quaternary structure, heterotrimer of A, B and C subunits.

It carries out the reaction L-glutamyl-tRNA(Gln) + L-glutamine + ATP + H2O = L-glutaminyl-tRNA(Gln) + L-glutamate + ADP + phosphate + H(+). The enzyme catalyses L-aspartyl-tRNA(Asn) + L-glutamine + ATP + H2O = L-asparaginyl-tRNA(Asn) + L-glutamate + ADP + phosphate + 2 H(+). Its function is as follows. Allows the formation of correctly charged Asn-tRNA(Asn) or Gln-tRNA(Gln) through the transamidation of misacylated Asp-tRNA(Asn) or Glu-tRNA(Gln) in organisms which lack either or both of asparaginyl-tRNA or glutaminyl-tRNA synthetases. The reaction takes place in the presence of glutamine and ATP through an activated phospho-Asp-tRNA(Asn) or phospho-Glu-tRNA(Gln). In Campylobacter jejuni subsp. doylei (strain ATCC BAA-1458 / RM4099 / 269.97), this protein is Aspartyl/glutamyl-tRNA(Asn/Gln) amidotransferase subunit B.